Reading from the N-terminus, the 87-residue chain is Spermatid-specific protein S1 (87 aa).

The segment at 1 to 36 (TKSRYRNRRSRPRRRYGRRMRKTRCRRKGRRISRRP) is disordered.

Its subcellular location is the nucleus. It is found in the chromosome. Its function is as follows. Involved in nuclear basic protein transition: histones are replaced by spermatid specific proteins which are themselves replaced by protamines in late spermatids. The chain is Spermatid-specific protein S1 from Scyliorhinus canicula (Small-spotted catshark).